The primary structure comprises 670 residues: Auxin response factor 16 (670 aa).

A DNA-binding region (TF-B3) is located at residues 120-222; it reads FAKTLTQSDA…DLCVGIRRAK (103 aa). Residues 545–557 are compositionally biased toward polar residues; it reads KTQISSGGSNQNG. The disordered stretch occupies residues 545–579; it reads KTQISSGGSNQNGVAGREFSSSDEGSPCSKKVHDA. The PB1 domain occupies 584–664; sequence TGHCKVFMES…RRLTILTEQG (81 aa).

Belongs to the ARF family. As to quaternary structure, homodimers and heterodimers.

The protein localises to the nucleus. Its function is as follows. Auxin response factors (ARFs) are transcriptional factors that bind specifically to the DNA sequence 5'-TGTCTC-3' found in the auxin-responsive promoter elements (AuxREs). Could act as transcriptional activator or repressor. Formation of heterodimers with Aux/IAA proteins may alter their ability to modulate early auxin response genes expression. This chain is Auxin response factor 16 (ARF16), found in Arabidopsis thaliana (Mouse-ear cress).